Here is an 88-residue protein sequence, read N- to C-terminus: Platelet factor 4 (88 aa).

T7 is a glycosylation site (O-linked (GalNAc...) threonine). Intrachain disulfides connect C25-C51 and C27-C67. Residue S41 is modified to Phosphoserine. Residue 76–82 (KKILKKL) participates in heparin binding.

This sequence belongs to the intercrine alpha (chemokine CxC) family. As to quaternary structure, homotetramer. Interacts with TNFAIP6 (via Link domain). Interacts with CCR1. Interacts with CXCR3. Interacts with THBD; this interaction enhances generation of activated protein C. In terms of processing, O-linked glycan consists of Gal-GalNAc disaccharide which is modified with sialic acid residues (microheterogeneity).

The protein resides in the secreted. Chemokine released during platelet aggregation that plays a role in different biological processes including hematopoiesis, cell proliferation, differentiation, and activation. Acts via different functional receptors including CCR1, CXCR3A or CXCR3B. Upon interaction with CXCR3A receptor, induces activated T-lymphocytes migration mediated via downstream Ras/extracellular signal-regulated kinase (ERK) signaling. Neutralizes the anticoagulant effect of heparin by binding more strongly to heparin than to the chondroitin-4-sulfate chains of the carrier molecule. Plays a role in the inhibition of hematopoiesis and in the maintenance of hematopoietic stem cell (HSC) quiescence. Chemotactic for neutrophils and monocytes via CCR1. Inhibits endothelial cell proliferation. In cooperation with toll-like receptor 8/TLR8, induces chromatin remodeling and activates inflammatory gene expression via the TBK1-IRF5 axis. In addition, induces myofibroblast differentiation and collagen synthesis in different precursor cells, including endothelial cells, by stimulating endothelial-to-mesenchymal transition. Interacts with thrombomodulin/THBD to enhance the activation of protein C and thus potentiates its anticoagulant activity. The polypeptide is Platelet factor 4 (PF4) (Bos taurus (Bovine)).